The sequence spans 122 residues: Fluoride-specific ion channel FluC (122 aa).

The next 4 helical transmembrane spans lie at 1–21 (MIGT…SRML), 34–54 (FPYG…LFFS), 60–80 (GVHI…FTTF), and 100–120 (FLNI…GFLI).

This sequence belongs to the fluoride channel Fluc/FEX (TC 1.A.43) family.

The protein resides in the cell inner membrane. The enzyme catalyses fluoride(in) = fluoride(out). Its function is as follows. Fluoride-specific ion channel. Important for reducing fluoride concentration in the cell, thus reducing its toxicity. The sequence is that of Fluoride-specific ion channel FluC from Campylobacter lari (strain RM2100 / D67 / ATCC BAA-1060).